The chain runs to 173 residues: FMN reductase (NADH) RutF 2 (173 aa).

It belongs to the non-flavoprotein flavin reductase family. RutF subfamily.

It carries out the reaction FMNH2 + NAD(+) = FMN + NADH + 2 H(+). Its function is as follows. Catalyzes the reduction of FMN to FMNH2 which is used to reduce pyrimidine by RutA via the Rut pathway. The protein is FMN reductase (NADH) RutF 2 of Rhizobium rhizogenes (strain K84 / ATCC BAA-868) (Agrobacterium radiobacter).